Reading from the N-terminus, the 837-residue chain is Dapper homolog 2 (837 aa).

The stretch at 65 to 113 (ENVSKEELRLEATLSLLKQQLTRLRRQDVGLKTHLQQLDQQITELKLDV) forms a coiled coil. Disordered stretches follow at residues 189 to 265 (ADES…PKYQ), 424 to 497 (HGKH…DKSS), 512 to 564 (GSQR…KQSG), 600 to 649 (QQIP…HTQR), and 738 to 782 (EMSD…EDEG). Polar residues-rich tracts occupy residues 246–265 (VKSS…PKYQ) and 432–445 (LDLQ…NNTA). 3 stretches are compositionally biased toward basic and acidic residues: residues 456-466 (ASEKRSGHFPK), 486-496 (EGSRASCHDKS), and 548-560 (LSRE…RTDL). A compositionally biased stretch (polar residues) spans 741–759 (DYTTNRFGDSESSQGSQTA). Positions 768–782 (LDEEDLLEEEEEDEG) are enriched in acidic residues. The PDZ-binding signature appears at 834-837 (MTLV).

Belongs to the dapper family. Interacts with dvl2.

The protein localises to the cytoplasm. Its subcellular location is the late endosome. The protein resides in the nucleus. It localises to the cell membrane. Functionally, involved in regulation of intracellular signaling pathways during development. Specifically thought to play a role in canonical and/or non-canonical Wnt signaling pathways through interaction with DSH (Dishevelled) family proteins. Positive regulator of the Wnt signaling pathway which acts downstream of wnt1 indicative for non-canonical Wnt signaling. Also negatively regulates the Nodal signaling pathway, possibly by promoting the lysosomal degradation of Nodal receptors. Required for convergent extension movements in gastrulation. This Danio rerio (Zebrafish) protein is Dapper homolog 2 (dact2).